Here is a 79-residue protein sequence, read N- to C-terminus: Small ribosomal subunit protein uS17 (79 aa).

Belongs to the universal ribosomal protein uS17 family. In terms of assembly, part of the 30S ribosomal subunit.

In terms of biological role, one of the primary rRNA binding proteins, it binds specifically to the 5'-end of 16S ribosomal RNA. This Mesorhizobium japonicum (strain LMG 29417 / CECT 9101 / MAFF 303099) (Mesorhizobium loti (strain MAFF 303099)) protein is Small ribosomal subunit protein uS17.